Consider the following 267-residue polypeptide: Myeloid leukemia factor 1 (267 aa).

Phosphoserine occurs at positions 6, 8, 32, and 34. The interval 39–67 is disordered; it reads RDLLSISDGRGRTHNRRERDDGEDSLTHA. Positions 50–125 are interaction with COPS3; the sequence is RTHNRRERDD…VGDEPPKVFQ (76 aa).

It belongs to the MLF family. In terms of assembly, interacts with CENPU. Also interacts with NRBP1/MADM, YWHAZ/14-3-3-zeta and HNRPUL2/MANP. NRBP1 recruits a serine kinase which phosphorylates both itself and MLF1. Phosphorylated MLF1 then binds to YWHAZ and is retained in the cytoplasm. Retained in the nucleus by binding to HNRPUL2. Binds to COPS3/CSN3 which is required for suppression of COP1 and activation of p53. In terms of processing, phosphorylation is required for binding to YWHAZ. As to expression, highly expressed in skeletal muscle, heart, testis. Also found in lung, but not in spleen, thymus, bone marrow, liver and kidney.

Its subcellular location is the cytoplasm. The protein localises to the nucleus. It is found in the cell projection. The protein resides in the cilium. It localises to the cytoskeleton. Its subcellular location is the cilium basal body. Its function is as follows. Involved in lineage commitment of primary hemopoietic progenitors by restricting erythroid formation and enhancing myeloid formation. Interferes with erythropoietin-induced erythroid terminal differentiation by preventing cells from exiting the cell cycle through suppression of CDKN1B/p27Kip1 levels. Suppresses COP1 activity via CSN3 which activates p53 and induces cell cycle arrest. Binds DNA and affects the expression of a number of genes so may function as a transcription factor in the nucleus. The polypeptide is Myeloid leukemia factor 1 (Mlf1) (Mus musculus (Mouse)).